Here is a 436-residue protein sequence, read N- to C-terminus: Acetyl-CoA decarbonylase/synthase complex subunit delta 1 (436 aa).

This sequence belongs to the CdhD family. As to quaternary structure, heterodimer of delta and gamma chains. The ACDS complex is made up of alpha, epsilon, beta, gamma and delta chains with a probable stoichiometry of (alpha(2)epsilon(2))(4)-beta(8)-(gamma(1)delta(1))(8) (Potential).

It functions in the pathway one-carbon metabolism; methanogenesis from acetate. Part of a complex that catalyzes the reversible cleavage of acetyl-CoA, allowing growth on acetate as sole source of carbon and energy. Probably maintains the overall quaternary structure of the ACDS complex. The polypeptide is Acetyl-CoA decarbonylase/synthase complex subunit delta 1 (cdhD1) (Methanosarcina acetivorans (strain ATCC 35395 / DSM 2834 / JCM 12185 / C2A)).